A 375-amino-acid polypeptide reads, in one-letter code: Chlorophyll a/b light-harvesting protein PcbC (375 aa).

A run of 6 helical transmembrane segments spans residues 40–60 (LLGA…SITV), 102–122 (YFVI…GGLF), 151–171 (LSLI…AFVA), 225–245 (IIGG…WHIL), 262–282 (AILS…GFFV), and 300–320 (GAAA…VWHA). The interval 352-375 (ARTFIGRGKPQPEPPKKKGLFGRG) is disordered.

It belongs to the PsbB/PsbC family. IsiA/Pcb subfamily. The antenna complex consists of chlorophylls (a and b) and chlorophyll a/b binding proteins. Chlorophyll a is required as a cofactor. Requires chlorophyll b as cofactor.

It localises to the cellular thylakoid membrane. Its function is as follows. The antenna complex functions as a light receptor, it captures and delivers excitation energy to photosystems II and I. The Prochlorales pcb genes are not related to higher plant LHCs. The chain is Chlorophyll a/b light-harvesting protein PcbC (pcbC) from Prochlorothrix hollandica.